Here is a 398-residue protein sequence, read N- to C-terminus: Acetylornithine aminotransferase (398 aa).

Pyridoxal 5'-phosphate-binding positions include 105 to 106 (GA) and F138. Residue R141 participates in N(2)-acetyl-L-ornithine binding. Residue 223 to 226 (DEVQ) coordinates pyridoxal 5'-phosphate. Position 252 is an N6-(pyridoxal phosphate)lysine (K252). Residue T280 coordinates N(2)-acetyl-L-ornithine. T281 lines the pyridoxal 5'-phosphate pocket.

The protein belongs to the class-III pyridoxal-phosphate-dependent aminotransferase family. ArgD subfamily. In terms of assembly, homodimer. Pyridoxal 5'-phosphate serves as cofactor.

It localises to the cytoplasm. The enzyme catalyses N(2)-acetyl-L-ornithine + 2-oxoglutarate = N-acetyl-L-glutamate 5-semialdehyde + L-glutamate. It functions in the pathway amino-acid biosynthesis; L-arginine biosynthesis; N(2)-acetyl-L-ornithine from L-glutamate: step 4/4. This Methanocaldococcus jannaschii (strain ATCC 43067 / DSM 2661 / JAL-1 / JCM 10045 / NBRC 100440) (Methanococcus jannaschii) protein is Acetylornithine aminotransferase.